The following is a 153-amino-acid chain: Deoxyuridine 5'-triphosphate nucleotidohydrolase (153 aa).

Substrate-binding positions include 71–73, asparagine 84, 88–90, and lysine 98; these read RSG and TID.

It belongs to the dUTPase family. Mg(2+) is required as a cofactor.

The enzyme catalyses dUTP + H2O = dUMP + diphosphate + H(+). Its pathway is pyrimidine metabolism; dUMP biosynthesis; dUMP from dCTP (dUTP route): step 2/2. Its function is as follows. This enzyme is involved in nucleotide metabolism: it produces dUMP, the immediate precursor of thymidine nucleotides and it decreases the intracellular concentration of dUTP so that uracil cannot be incorporated into DNA. This is Deoxyuridine 5'-triphosphate nucleotidohydrolase from Wolbachia sp. subsp. Drosophila simulans (strain wRi).